A 109-amino-acid chain; its full sequence is Parvalbumin beta (109 aa).

Ala-2 carries the post-translational modification N-acetylalanine. The igE-binding stretch occupies residues 22 to 41 (AGSFDHKKFFKACGLSGKST). 2 EF-hand domains span residues 39–74 (KSTD…FKAG) and 78–109 (LSDA…MIKG). 11 residues coordinate Ca(2+): Asp-52, Asp-54, Ser-56, Phe-58, Glu-60, Glu-63, Asp-91, Asp-93, Asp-95, Lys-97, and Glu-102.

It belongs to the parvalbumin family. In terms of processing, the N-terminus is blocked. Expressed in both white and dark muscles (at protein level). About eight and a half times lower expression in the dark muscle than in the white muscle (at protein level).

In terms of biological role, in muscle, parvalbumin is thought to be involved in relaxation after contraction. It binds two calcium ions. The polypeptide is Parvalbumin beta (Scomber japonicus (Chub mackerel)).